A 243-amino-acid chain; its full sequence is NAD(P)H-quinone oxidoreductase subunit K (243 aa).

[4Fe-4S] cluster-binding residues include Cys-59, Cys-60, Cys-124, and Cys-155.

It belongs to the complex I 20 kDa subunit family. NDH-1 can be composed of about 15 different subunits; different subcomplexes with different compositions have been identified which probably have different functions. [4Fe-4S] cluster serves as cofactor.

It localises to the cellular thylakoid membrane. The enzyme catalyses a plastoquinone + NADH + (n+1) H(+)(in) = a plastoquinol + NAD(+) + n H(+)(out). It catalyses the reaction a plastoquinone + NADPH + (n+1) H(+)(in) = a plastoquinol + NADP(+) + n H(+)(out). Its function is as follows. NDH-1 shuttles electrons from an unknown electron donor, via FMN and iron-sulfur (Fe-S) centers, to quinones in the respiratory and/or the photosynthetic chain. The immediate electron acceptor for the enzyme in this species is believed to be plastoquinone. Couples the redox reaction to proton translocation, and thus conserves the redox energy in a proton gradient. Cyanobacterial NDH-1 also plays a role in inorganic carbon-concentration. This is NAD(P)H-quinone oxidoreductase subunit K from Picosynechococcus sp. (strain ATCC 27264 / PCC 7002 / PR-6) (Agmenellum quadruplicatum).